The chain runs to 563 residues: MSETINTAAQFPTFEKPTVQFNEKGWGPCELPDTFKDVPYQPFSKNDRLGKICDWTSTSNNDKKYQNKYASTFGTGNQYAYYHEEDETTFHLVDTARVQKPPHQRGRFRNMRNSRSGRGRNARGGLNTHGHGMTTLSSKNVKARDPRRGMGKRFGNRGPPPKMRESSVAVRADWASIEEMDFPRLIKLSLPNIKDGEDITTCGTLEYYDKTYDRINVKNEKPLQKIDRIVHTVTTTDDPVIRRLSKTIGNVFATDAILATIMCSTRSNYSWDIVIEKVGEKIFMDKRDHTEFDLLTVNETSVEPPTDDDSSCNSPRNLAIEATFINHNFSQQVLKTGDQEAKYKFEETNPFISEDEDIQVASVGYRYKKWELGSDIVLVARCEHDGVLQTPSGEPQFLSIKALNEWDSKLANGVEWRQKLDTQRGAVLANELRNNACKLAKWTVQAVLAGSDQLKLGYVSRINPRDHSRHVILGTQQFKPHEFATQINLSMDNAWGILRCIIDLVMKQKDGKYLIMKDPNKPIIRLYDIPDNTFDSDDSDDGEGDDGEGFQQVYNYANNSNKI.

Positions 98–167 (VQKPPHQRGR…GPPPKMRESS (70 aa)) are disordered. Over residues 100-121 (KPPHQRGRFRNMRNSRSGRGRN) the composition is skewed to basic residues. The residue at position 128 (threonine 128) is a Phosphothreonine. An RNA gate region spans residues 291 to 305 (EFDLLTVNETSVEPP).

Belongs to the eIF-3 subunit D family. In terms of assembly, component of the eukaryotic translation initiation factor 3 (eIF-3) complex. The eIF-3 complex interacts with pix.

Its subcellular location is the cytoplasm. In terms of biological role, mRNA cap-binding component of the eukaryotic translation initiation factor 3 (eIF-3) complex, which is involved in protein synthesis of a specialized repertoire of mRNAs and, together with other initiation factors, stimulates binding of mRNA and methionyl-tRNAi to the 40S ribosome. The eIF-3 complex specifically targets and initiates translation of a subset of mRNAs involved in cell proliferation. In the eIF-3 complex, eif3d specifically recognizes and binds the 7-methylguanosine cap of a subset of mRNAs. The protein is Eukaryotic translation initiation factor 3 subunit D-1 of Drosophila virilis (Fruit fly).